Reading from the N-terminus, the 51-residue chain is Insulin (51 aa).

3 disulfide bridges follow: C7-C37, C19-C50, and C36-C41.

Belongs to the insulin family. In terms of assembly, heterodimer of a B chain and an A chain linked by two disulfide bonds.

It localises to the secreted. Insulin decreases blood glucose concentration. It increases cell permeability to monosaccharides, amino acids and fatty acids. It accelerates glycolysis, the pentose phosphate cycle, and glycogen synthesis in liver. This chain is Insulin (ins), found in Anguilla rostrata (American eel).